A 476-amino-acid polypeptide reads, in one-letter code: Glycogen synthase (476 aa).

K15 contributes to the ADP-alpha-D-glucose binding site.

It belongs to the glycosyltransferase 1 family. Bacterial/plant glycogen synthase subfamily.

The catalysed reaction is [(1-&gt;4)-alpha-D-glucosyl](n) + ADP-alpha-D-glucose = [(1-&gt;4)-alpha-D-glucosyl](n+1) + ADP + H(+). It participates in glycan biosynthesis; glycogen biosynthesis. Its function is as follows. Synthesizes alpha-1,4-glucan chains using ADP-glucose. The polypeptide is Glycogen synthase (Bacillus cereus (strain ATCC 14579 / DSM 31 / CCUG 7414 / JCM 2152 / NBRC 15305 / NCIMB 9373 / NCTC 2599 / NRRL B-3711)).